The sequence spans 520 residues: Phospholipase C A (520 aa).

A signal peptide (tat-type signal) is located at residues 1–38; sequence MSASPLLGMSRREFLTKLTGAGAAAFLMDWAAPVIEKA.

This sequence belongs to the bacterial phospholipase C family. Predicted to be exported by the Tat system. The position of the signal peptide cleavage has not been experimentally proven.

The protein resides in the secreted. It localises to the cell wall. The enzyme catalyses a 1,2-diacyl-sn-glycero-3-phosphocholine + H2O = phosphocholine + a 1,2-diacyl-sn-glycerol + H(+). Its function is as follows. Involved in virulence. Induces cytotoxic effects on mouse macrophage cell lines, via direct or indirect enzymatic hydrolysis of cell membrane phospholipids. Hydrolyzes phosphatidylcholine. This is Phospholipase C A from Mycobacterium tuberculosis (strain CDC 1551 / Oshkosh).